Consider the following 303-residue polypeptide: UPF0282 protein PAE3680 (303 aa).

This sequence belongs to the UPF0282 family.

The protein is UPF0282 protein PAE3680 of Pyrobaculum aerophilum (strain ATCC 51768 / DSM 7523 / JCM 9630 / CIP 104966 / NBRC 100827 / IM2).